The sequence spans 510 residues: 2,3-bisphosphoglycerate-independent phosphoglycerate mutase (510 aa).

Asp14 and Ser64 together coordinate Mn(2+). Catalysis depends on Ser64, which acts as the Phosphoserine intermediate. Substrate-binding positions include His125, 155–156 (RD), Arg187, Arg193, 259–262 (RADR), and Lys332. Residues Asp399, His403, Asp440, His441, and His459 each coordinate Mn(2+).

This sequence belongs to the BPG-independent phosphoglycerate mutase family. Monomer. Mn(2+) serves as cofactor.

It carries out the reaction (2R)-2-phosphoglycerate = (2R)-3-phosphoglycerate. It functions in the pathway carbohydrate degradation; glycolysis; pyruvate from D-glyceraldehyde 3-phosphate: step 3/5. Catalyzes the interconversion of 2-phosphoglycerate and 3-phosphoglycerate. The chain is 2,3-bisphosphoglycerate-independent phosphoglycerate mutase from Pseudomonas savastanoi pv. phaseolicola (strain 1448A / Race 6) (Pseudomonas syringae pv. phaseolicola (strain 1448A / Race 6)).